The primary structure comprises 507 residues: ATP synthase subunit alpha, chloroplastic (507 aa).

170 to 177 is an ATP binding site; sequence GDRQTGKT.

The protein belongs to the ATPase alpha/beta chains family. In terms of assembly, F-type ATPases have 2 components, CF(1) - the catalytic core - and CF(0) - the membrane proton channel. CF(1) has five subunits: alpha(3), beta(3), gamma(1), delta(1), epsilon(1). CF(0) has four main subunits: a, b, b' and c.

It localises to the plastid. Its subcellular location is the chloroplast thylakoid membrane. The enzyme catalyses ATP + H2O + 4 H(+)(in) = ADP + phosphate + 5 H(+)(out). Produces ATP from ADP in the presence of a proton gradient across the membrane. The alpha chain is a regulatory subunit. In Sorghum bicolor (Sorghum), this protein is ATP synthase subunit alpha, chloroplastic.